We begin with the raw amino-acid sequence, 3680 residues long: Dystrophin (3680 aa).

Positions 1-237 (MLWWEEVEDC…ILMYITSLFQ (237 aa)) are actin-binding. Calponin-homology (CH) domains lie at 15-119 (DVQK…LHWQ) and 134-240 (TNSE…QVLP). Residues 63 to 72 (PKEKGSTRVH) form an ANK2- and ANK-3 binding region. A compositionally biased stretch (polar residues) spans 310–323 (TSDPTRSPLPSQHL). The segment at 310–332 (TSDPTRSPLPSQHLETPEDKSFG) is disordered. Spectrin repeat units follow at residues 340–448 (ANLD…NLHK), 449–557 (VLMD…LLQD), 560–668 (LKWQ…QISQ), 720–829 (EIRK…WLEY), 831–935 (NNII…ELQT), 944–1047 (RYQE…KLEE), 1050–1156 (AKLR…ALKG), 1159–1265 (DKTV…TLEE), 1268–1369 (ACWH…LLEQ), 1370–1465 (SIQS…LFQK), 1470–1570 (EQRL…QLEK), 1573–1678 (KLSR…LLLE), 1681–1780 (KHME…KASI), 1781–1876 (PLKE…KALE), 1879–1981 (HQWY…TVHE), 1994–2103 (EISY…RFDR), 2106–2210 (EKWR…RLEE), 2213–2320 (NILS…EIEA), 2321–2418 (HVKD…LRAK), 2470–2572 (FNRA…QLTE), 2575–2681 (KDST…ALEE), 2684–2797 (RLLQ…HLEA), 2803–2925 (KRLH…RKID), and 2930–3035 (RLQE…QLHE). The segment at 1418–1915 (DLTSHEISLE…PEPRDERKIK (498 aa)) is interaction with SYNM. In terms of domain architecture, WW spans 3050–3083 (TSVQGPWERAISPNKVPYYINHETQTTCWDHPKM). The tract at residues 3053–3403 (QGPWERAISP…TVLEGDNMET (351 aa)) is interaction with SYNM. Residues 3303–3359 (KHQAKCNICKECPIIGFRYRSLKHFNYDICQSCFFSGRVAKGHKMHYPMVEYCTPTT) form a ZZ-type; degenerate zinc finger. Zn(2+) is bound by residues cysteine 3308, cysteine 3311, cysteine 3332, and cysteine 3335. The tract at residues 3461–3513 (DDEHLLIQHYWRSLNQESPLSQPRSPAQILISLESEERGELERILADLEGRNR) is binds to SNTB1. 3 positions are modified to phosphoserine: serine 3478, serine 3485, and serine 3495. 2 disordered regions span residues 3524–3549 (QQHEHKGLSPLPSPPEMMPTSPQSPR) and 3595–3680 (PQAE…EDTM). 2 stretches are compositionally biased toward polar residues: residues 3602–3621 (NGTTVSSPSTSLQRSDSSQP) and 3658–3668 (LNHSFPSSRGR). Residues serine 3607, serine 3608, serine 3612, serine 3618, serine 3619, and serine 3661 each carry the phosphoserine modification.

In terms of assembly, interacts with SYNM. Interacts with the syntrophins SNTG1 and SNTG2. Interacts with KRT19. Component of the dystrophin-associated glycoprotein complex which is composed of three subcomplexes: a cytoplasmic complex comprised of DMD (or UTRN), DTNA and a number of syntrophins, such as SNTB1, SNTB2, SNTG1 and SNTG2, the transmembrane dystroglycan complex, and the sarcoglycan-sarcospan complex. Interacts with DAG1 (betaDAG1) with DMD; the interaction is inhibited by phosphorylation on the PPXY motif of DAG1. Interacts with SYNM; SNTA1 and SNTB1. Interacts with CMYA5. Directly interacts with ANK2 and ANK3; these interactions do not interfere with betaDAG1-binding and are necessary for proper localization in muscle cells. Identified in a dystroglycan complex that contains at least PRX, DRP2, UTRN, DMD and DAG1. Interacts with DTNB. Interacts with PGM5; the interaction is direct. Interacts with NOS1; localizes NOS1 to sarcolemma in muscle cells.

The protein localises to the cell membrane. Its subcellular location is the sarcolemma. It is found in the cytoplasm. It localises to the cytoskeleton. The protein resides in the postsynaptic cell membrane. Anchors the extracellular matrix to the cytoskeleton via F-actin. Ligand for dystroglycan. Component of the dystrophin-associated glycoprotein complex which accumulates at the neuromuscular junction (NMJ) and at a variety of synapses in the peripheral and central nervous systems and has a structural function in stabilizing the sarcolemma. Also implicated in signaling events and synaptic transmission. The protein is Dystrophin (DMD) of Canis lupus familiaris (Dog).